Here is a 487-residue protein sequence, read N- to C-terminus: Protein NEN2 (487 aa).

The 162-residue stretch at 18–179 (FFDVETTIPF…LDDVRMNFEV (162 aa)) folds into the Exonuclease domain. Aspartate 20 and glutamate 22 together coordinate Mg(2+). Histidine 167 acts as the Proton donor/acceptor in catalysis. Aspartate 172 is a Mg(2+) binding site. Disordered stretches follow at residues 200-233 (NSVT…TGEN) and 269-291 (SDVP…GTGD). Positions 221–233 (PLQSPTDQQTGEN) are enriched in polar residues.

The cofactor is Mg(2+). In terms of tissue distribution, expressed in the sieve elements and phloem pole pericycle cells.

Its subcellular location is the cytoplasm. The protein resides in the nucleus. In terms of biological role, probable exonuclease involved in enuclation of sieve elements. The polypeptide is Protein NEN2 (Arabidopsis thaliana (Mouse-ear cress)).